The primary structure comprises 423 residues: Site-specific recombinase Flp (423 aa).

One can recognise a Tyr recombinase Flp-type domain in the interval 136–422 (GNSHSKKMLK…DYLSSYINRR (287 aa)). The active-site O-(3'-phospho-DNA)-tyrosine intermediate is the Tyr-343.

The protein belongs to the 'phage' integrase family. In terms of assembly, homotetramer.

Its function is as follows. Part of the plasmid amplification system, which corrects any decrease in copy number caused by a rare missegregation event. Catalyzes the recombination between the large inverted repetitions of the 2-micron plasmid during plasmid replication. This recombination event changes the direction of one of the two replication forks in the bidirectionally replicating molecule, effectively resulting in multiple rounds of replication from a single initiation event. Binds specifically to the FLP recognition target (FRT) site where it induces DNA to bend. Three types of bend exist. Type I is approximately 60 degrees and results from 1 FLP molecule binding to 1 symmetry element. Type II is &gt;144 degrees and results from FLP molecules binding to symmetry elements a and b. Type III is approximately 65 degrees and results from FLP molecules binding to symmetry elements b and c. The polypeptide is Site-specific recombinase Flp (FLP1) (Saccharomyces cerevisiae (strain ATCC 204508 / S288c) (Baker's yeast)).